The following is a 792-amino-acid chain: uncharacterized protein (792 aa).

25 consecutive repeat copies span residues 91–102 (NSSTNATTTASI), 103–114 (NVRTSATTTASI), 115–126 (NVRTSATTTEST), 127–138 (NSNTNATTTEST), 139–150 (NSSTNATTTASI), 151–162 (NVRTSATTTEST), 163–174 (NSSTNATTTASI), 175–186 (NVRTSATTTEST), 187–198 (NSSTNATTTASI), 199–210 (NVRTSATTTEST), 211–222 (NSNTNASTNATT), 223–234 (NSSTNATTTAST), 235–246 (NVRTSATTNATT), 247–258 (NSSTNATTTAST), 259–270 (NVRTSATTTAST), 271–282 (NVRTSATTTASI), 283–294 (NVRTSATTTESI), 295–306 (NSSTNATTTEST), 307–318 (NSNTSATTTEST), 319–330 (DSNTNATTTASI), 331–342 (NVRTSATTTEST), 343–354 (NSNTSATTTEST), 355–366 (DSNTSATTTAST), 367–378 (NSSTNATTTAST), and 379–390 (NSSTNATTTEST). Positions 91–390 (NSSTNATTTA…STNATTTEST (300 aa)) are 25 X 12 AA tandem repeat of N-[SV]-[RS]-T-[NS]-A-T-T-T-[AE]-[ST]-[IT]. Residues 113–417 (SINVRTSATT…RFHPVTDINK (305 aa)) are disordered. The segment covering 118 to 393 (TSATTTESTN…ATTTESTNAS (276 aa)) has biased composition (low complexity). Basic and acidic residues predominate over residues 394-417 (AKEDANKDGNAEDNRFHPVTDINK).

This is an uncharacterized protein from Saccharomyces cerevisiae (strain ATCC 204508 / S288c) (Baker's yeast).